The following is a 315-amino-acid chain: Methionyl-tRNA formyltransferase (315 aa).

113 to 116 (SLLP) contacts (6S)-5,6,7,8-tetrahydrofolate.

Belongs to the Fmt family.

It catalyses the reaction L-methionyl-tRNA(fMet) + (6R)-10-formyltetrahydrofolate = N-formyl-L-methionyl-tRNA(fMet) + (6S)-5,6,7,8-tetrahydrofolate + H(+). Functionally, attaches a formyl group to the free amino group of methionyl-tRNA(fMet). The formyl group appears to play a dual role in the initiator identity of N-formylmethionyl-tRNA by promoting its recognition by IF2 and preventing the misappropriation of this tRNA by the elongation apparatus. The sequence is that of Methionyl-tRNA formyltransferase from Edwardsiella ictaluri (strain 93-146).